Consider the following 347-residue polypeptide: Ion-translocating oxidoreductase complex subunit D (347 aa).

4 helical membrane-spanning segments follow: residues 15–35 (IMFLVIVACLPGIFAKYYFFG), 36–56 (IGTLIQIFFSIFISLVLEIII), 84–104 (IPPLLPWWMTSIGLFFAIVVA), and 114–134 (NIFNPAMVGYAVLLISFPVYM). Thr182 bears the FMN phosphoryl threonine mark. 5 helical membrane passes run 217–237 (CINISFFLGGIFLLFTKIICW), 239–259 (IPISFLSSLGMLSIITYFYSK), 261–281 (LFMSPQVHFFSGGTMICAFFI), 289–309 (ACNNVGKIVFGIIIGFLVWII), and 315–335 (YPDAIAFSVLFANMTVPLVDY).

This sequence belongs to the NqrB/RnfD family. As to quaternary structure, the complex is composed of six subunits: RnfA, RnfB, RnfC, RnfD, RnfE and RnfG. FMN serves as cofactor.

It localises to the cell inner membrane. Functionally, part of a membrane-bound complex that couples electron transfer with translocation of ions across the membrane. In Buchnera aphidicola subsp. Acyrthosiphon pisum (strain 5A), this protein is Ion-translocating oxidoreductase complex subunit D.